A 440-amino-acid polypeptide reads, in one-letter code: MQKGKGRTSRIRRRKLCGSSESRGVNESHKSEFIELRKWLKARKFQDSNLAPACFPGTGRGLMSQTSLQEGQMIISLPESCLLTTDTVIRSYLGAYITKWKPPPSPLLALCTFLVSEKHAGHRSLWKPYLEILPKAYTCPVCLEPEVVNLLPKSLKAKAEEQRAHVQEFFASSRDFFSSLQPLFAEAVDSIFSYSALLWAWCTVNTRAVYLRPRQRECLSAEPDTCALAPYLDLLNHSPHVQVKAAFNEETHSYEIRTTSRWRKHEEVFICYGPHDNQRLFLEYGFVSVHNPHACVYVSREILVKYLPSTDKQMDKKISILKDHGYIENLTFGWDGPSWRLLTALKLLCLEAEKFTCWKKVLLGEVISDTNEKTSLDIAQKICYYFIEETNAVLQKVSHMKDEKEALINQLTLVESLWTEELKILRASAETLHSLQTAFT.

Over residues 1–16 (MQKGKGRTSRIRRRKL) the composition is skewed to basic residues. The interval 1–24 (MQKGKGRTSRIRRRKLCGSSESRG) is disordered. In terms of domain architecture, SET spans 48 to 273 (SNLAPACFPG…KHEEVFICYG (226 aa)). Y272 contributes to the S-adenosyl-L-methionine binding site.

This sequence belongs to the class V-like SAM-binding methyltransferase superfamily. SETD4 family. Forms a ternary complex with TBK1 and ZNF268; the interaction with TBK1 is ZNF268-dependent and leads to TBK1 monomethylation.

Its subcellular location is the cytoplasm. The protein localises to the cytosol. It localises to the nucleus. It catalyses the reaction L-lysyl(4)-[histone H3] + S-adenosyl-L-methionine = N(6)-methyl-L-lysyl(4)-[histone H3] + S-adenosyl-L-homocysteine + H(+). The enzyme catalyses N(6)-methyl-L-lysyl(4)-[histone H3] + S-adenosyl-L-methionine = N(6),N(6)-dimethyl-L-lysyl(4)-[histone H3] + S-adenosyl-L-homocysteine + H(+). It carries out the reaction L-lysyl(20)-[histone H4] + S-adenosyl-L-methionine = N(6)-methyl-L-lysyl(20)-[histone H4] + S-adenosyl-L-homocysteine + H(+). The catalysed reaction is N(6)-methyl-L-lysyl(20)-[histone H4] + S-adenosyl-L-methionine = N(6),N(6)-dimethyl-L-lysyl(20)-[histone H4] + S-adenosyl-L-homocysteine + H(+). It catalyses the reaction N(6),N(6)-dimethyl-L-lysyl(20)-[histone H4] + S-adenosyl-L-methionine = N(6),N(6),N(6)-trimethyl-L-lysyl(20)-[histone H4] + S-adenosyl-L-homocysteine + H(+). The enzyme catalyses L-lysyl-[protein] + S-adenosyl-L-methionine = N(6)-methyl-L-lysyl-[protein] + S-adenosyl-L-homocysteine + H(+). Functionally, protein-lysine N-methyltransferase that methylates both histones and non-histone proteins. Via its catalytic activity, regulates many processes, including cell proliferation, cell differentiation, inflammatory response and apoptosis. Regulates the inflammatory response by mediating mono- and dimethylation of 'Lys-4' of histone H3 (H3K4me1 and H3K4me2, respectively), leading to activate the transcription of pro-inflammatory cytokines IL6 and TNF-alpha. Through the catalysis of TBK1 monomethylation, may regulate virus-induced interferon signaling. TBK1 monomethylation enhances its interaction with MAVS, STING and IRF3, hence promoting antiviral interferon signaling. Also involved in the regulation of stem cell quiescence by catalyzing the trimethylation of 'Lys-20' of histone H4 (H4K20me3), thereby promoting heterochromatin formation. In the brain, epigenetically controls quiescence of neural stem cells for sustaining a protected neural stem cell population and maintaining a stem cell reservoir for neurogenesis. Involved in proliferation, migration, paracrine and myogenic differentiation of bone marrow mesenchymal stem cells (BMSCs). Through the catalysis of XRCC5/Ku70 trimethylation, regulates BAX-mediated apoptosis. SETD4-catalyzed XRCC5 methylation results in XRCC5 translocation to the cytoplasm, where it interacts with BAX, sequestering it from the mitochondria, hence preventing BAX-mediated apoptosis. The protein is SET domain-containing protein 4 of Homo sapiens (Human).